Here is a 187-residue protein sequence, read N- to C-terminus: Protein TfaD (187 aa).

This sequence in the C-terminal section; belongs to the tfa family.

This Escherichia coli (strain K12) protein is Protein TfaD (tfaD).